The primary structure comprises 518 residues: Sensor protein kinase HptS (518 aa).

The next 2 helical transmembrane spans lie at 20–40 (IFPV…IYIW) and 222–242 (GITL…FGFI). The 217-residue stretch at 297–513 (EQLIHSIEHT…LICYKIPLSR (217 aa)) folds into the Histidine kinase domain. Histidine 325 is modified (phosphohistidine; by autocatalysis).

In terms of processing, autophosphorylated.

The protein localises to the cell membrane. It carries out the reaction ATP + protein L-histidine = ADP + protein N-phospho-L-histidine.. In terms of biological role, member of the two-component regulatory system HptS/HptR that regulates genes involved in hexose phosphate transport system in response to changes in extracellular phosphate sources. May act as a sensor protein kinase which is autophosphorylated at a histidine residue and transfers its phosphate group to the conserved aspartic acid residue in the regulatory domain of HptS. In turn, HptS antagonizes CcpA-dependent transcription of a subset of CcpA-regulated genes involved in antibiotic susceptibility. In Staphylococcus aureus (strain MSSA476), this protein is Sensor protein kinase HptS (hptS).